The following is a 2499-amino-acid chain: Probable polyketide synthase 22 (2499 aa).

A Ketosynthase family 3 (KS3) domain is found at 11-430 (DNQVAIVGLG…GSNACVLLSE (420 aa)). Residues Cys-177, His-316, and His-354 each act as for beta-ketoacyl synthase activity in the active site. The tract at residues 623–656 (GITPSIIVGHSLGEVASAFCSGMIDLETACFVIY) is acyl/malonyl transferases. Ser-633 acts as the For acyl/malonyl transferase activity in catalysis. Residues 922–1044 (APINQLGNKN…SRILMKSLDV (123 aa)) are N-terminal hotdog fold. A PKS/mFAS DH domain is found at 922–1209 (APINQLGNKN…IASTLSTKSE (288 aa)). The active-site Proton acceptor; for dehydratase activity is His-956. Residues 1059 to 1209 (NWSTLKREQL…IASTLSTKSE (151 aa)) form a C-terminal hotdog fold region. Asp-1121 functions as the Proton donor; for dehydratase activity in the catalytic mechanism. One can recognise a Carrier domain in the interval 2414 to 2491 (EKEFSIRQDI…QIINIVTTKV (78 aa)). Ser-2451 carries the post-translational modification O-(pantetheine 4'-phosphoryl)serine.

Requires pantetheine 4'-phosphate as cofactor.

Functionally, probable polyketide synthase. The sequence is that of Probable polyketide synthase 22 (pks22) from Dictyostelium discoideum (Social amoeba).